We begin with the raw amino-acid sequence, 426 residues long: UDP-N-acetylglucosamine 1-carboxyvinyltransferase (426 aa).

24-25 (KN) contributes to the phosphoenolpyruvate binding site. R95 contacts UDP-N-acetyl-alpha-D-glucosamine. C119 (proton donor) is an active-site residue. 2-(S-cysteinyl)pyruvic acid O-phosphothioketal is present on C119. UDP-N-acetyl-alpha-D-glucosamine-binding positions include 124–128 (RPVDQ), D308, and V330.

The protein belongs to the EPSP synthase family. MurA subfamily.

The protein localises to the cytoplasm. The enzyme catalyses phosphoenolpyruvate + UDP-N-acetyl-alpha-D-glucosamine = UDP-N-acetyl-3-O-(1-carboxyvinyl)-alpha-D-glucosamine + phosphate. It participates in cell wall biogenesis; peptidoglycan biosynthesis. Cell wall formation. Adds enolpyruvyl to UDP-N-acetylglucosamine. The polypeptide is UDP-N-acetylglucosamine 1-carboxyvinyltransferase (Deinococcus radiodurans (strain ATCC 13939 / DSM 20539 / JCM 16871 / CCUG 27074 / LMG 4051 / NBRC 15346 / NCIMB 9279 / VKM B-1422 / R1)).